The chain runs to 352 residues: C-C chemokine receptor type 5 (352 aa).

Residues Met1 to Ala30 are Extracellular-facing. Tyr3 is subject to Sulfotyrosine. O-linked (GalNAc...) serine glycosylation is found at Ser6 and Ser7. Sulfotyrosine is present on residues Tyr10, Tyr14, and Tyr15. Cystine bridges form between Cys20/Cys269 and Cys101/Cys178. The chain crosses the membrane as a helical span at residues Arg31–Cys58. The Cytoplasmic segment spans residues Lys59–Tyr68. Residues Leu69–Tyr89 traverse the membrane as a helical segment. Over Ala90–Gln102 the chain is Extracellular. A helical transmembrane segment spans residues Leu103–Ile124. The Cytoplasmic portion of the chain corresponds to Asp125 to Thr141. A helical transmembrane segment spans residues Val142–Phe166. The Extracellular portion of the chain corresponds to Thr167–Ile198. The chain crosses the membrane as a helical span at residues Val199–Leu218. Residues Lys219 to Arg235 are Cytoplasmic-facing. A helical membrane pass occupies residues Leu236–Phe260. Over Gln261–Gln277 the chain is Extracellular. A helical transmembrane segment spans residues Ala278 to Gly301. At Glu302 to Leu352 the chain is on the cytoplasmic side. 3 S-palmitoyl cysteine lipidation sites follow: Cys321, Cys323, and Cys324. Ser336, Ser337, Ser342, and Ser349 each carry phosphoserine; by BARK1.

This sequence belongs to the G-protein coupled receptor 1 family. As to quaternary structure, interacts with PRAF2. Efficient ligand binding to CCL3/MIP-1alpha and CCL4/MIP-1beta requires sulfation, O-glycosylation and sialic acid modifications. Glycosylation on Ser-6 is required for efficient binding of CCL4. Interacts with GRK2. Interacts with ARRB1 and ARRB2. Interacts with CNIH4. Interacts with S100A4; this interaction stimulates T-lymphocyte chemotaxis. Post-translationally, sulfated on at least 2 of the N-terminal tyrosines. Sulfation is required for efficient binding of the chemokines, CCL3 and CCL4. In terms of processing, palmitoylation in the C-terminal is important for cell surface expression. Phosphorylation on serine residues in the C-terminal is stimulated by binding CC chemokines especially by APO-RANTES. Post-translationally, O-glycosylated, but not N-glycosylated. Ser-6 appears to be the major site even if Ser-7 may be also O-glycosylated. Also sialylated glycans present which contribute to chemokine binding. Thr-16 and Ser-17 may also be glycosylated and, if so, with small moieties such as a T-antigen.

The protein resides in the cell membrane. Receptor for a number of inflammatory CC-chemokines including CCL3/MIP-1-alpha, CCL4/MIP-1-beta and RANTES and subsequently transduces a signal by increasing the intracellular calcium ion level. May play a role in the control of granulocytic lineage proliferation or differentiation. Participates in T-lymphocyte migration to the infection site by acting as a chemotactic receptor. In Hylobates moloch (Silvery gibbon), this protein is C-C chemokine receptor type 5 (CCR5).